A 346-amino-acid chain; its full sequence is Annexin A1 (346 aa).

Residue Ser-5 is modified to Phosphoserine; by TRPM7. An Isoglutamyl lysine isopeptide (Gln-Lys) (interchain with K-?) cross-link involves residue Gln-19. Position 21 is a phosphotyrosine; by EGFR (Tyr-21). Ser-27 bears the Phosphoserine; by PKC mark. A phosphoserine mark is found at Ser-34 and Ser-37. Annexin repeat units lie at residues 42–113 (FDAS…ALLK), 114–185 (TPAQ…SLAK), 197–269 (DLAD…AIVK), and 273–344 (STPA…ALCG). Lys-58 is subject to N6-acetyllysine. Ca(2+)-binding residues include Gly-59, Val-60, Glu-62, Lys-97, Leu-100, Glu-105, Met-127, Gly-129, Gly-131, Thr-132, and Glu-134. Thr-136 bears the Phosphothreonine mark. Ca(2+) is bound by residues Asp-171, Gly-210, and Arg-213. A Glycyl lysine isopeptide (Lys-Gly) (interchain with G-Cter in SUMO1); alternate cross-link involves residue Lys-214. Residue Lys-214 forms a Glycyl lysine isopeptide (Lys-Gly) (interchain with G-Cter in SUMO2); alternate linkage. Gly-215 contributes to the Ca(2+) binding site. Lys-239 carries the N6-acetyllysine modification. Residues Asp-253, Glu-255, and Leu-256 each contribute to the Ca(2+) site. Lys-257 participates in a covalent cross-link: Glycyl lysine isopeptide (Lys-Gly) (interchain with G-Cter in SUMO1). Positions 261, 286, 288, and 290 each coordinate Ca(2+). Position 312 is an N6-acetyllysine (Lys-312). Cys-324 and Cys-343 form a disulfide bridge. Ca(2+)-binding residues include Leu-328, Glu-330, and Thr-331. Lys-332 participates in a covalent cross-link: Glycyl lysine isopeptide (Lys-Gly) (interchain with G-Cter in SUMO1). Residue Glu-336 participates in Ca(2+) binding.

This sequence belongs to the annexin family. In terms of assembly, homodimer; non-covalently linked. Homodimer; linked by transglutamylation. Homodimers linked by transglutamylation are observed in placenta, but not in other tissues. Interacts with S100A11. Heterotetramer, formed by two molecules each of S100A11 and ANXA1. Interacts with DYSF. Interacts with EGFR. In terms of processing, phosphorylated by protein kinase C, EGFR and TRPM7. Phosphorylated in response to EGF treatment. Post-translationally, sumoylated. Proteolytically cleaved by cathepsin CTSG to release the active N-terminal peptide Ac2-26.

The protein resides in the nucleus. It localises to the cytoplasm. Its subcellular location is the cell projection. The protein localises to the cilium. It is found in the basolateral cell membrane. The protein resides in the lateral cell membrane. It localises to the cell membrane. Its subcellular location is the apical cell membrane. The protein localises to the membrane. It is found in the endosome membrane. The protein resides in the secreted. It localises to the extracellular space. Its subcellular location is the early endosome. The protein localises to the cytoplasmic vesicle membrane. It is found in the extracellular exosome. The protein resides in the cytoplasmic vesicle. It localises to the secretory vesicle lumen. Its subcellular location is the phagocytic cup. Plays important roles in the innate immune response as effector of glucocorticoid-mediated responses and regulator of the inflammatory process. Has anti-inflammatory activity. Plays a role in glucocorticoid-mediated down-regulation of the early phase of the inflammatory response. Contributes to the adaptive immune response by enhancing signaling cascades that are triggered by T-cell activation, regulates differentiation and proliferation of activated T-cells. Promotes the differentiation of T-cells into Th1 cells and negatively regulates differentiation into Th2 cells. Has no effect on unstimulated T-cells. Negatively regulates hormone exocytosis via activation of the formyl peptide receptors and reorganization of the actin cytoskeleton. Has high affinity for Ca(2+) and can bind up to eight Ca(2+) ions. Displays Ca(2+)-dependent binding to phospholipid membranes. Plays a role in the formation of phagocytic cups and phagosomes. Plays a role in phagocytosis by mediating the Ca(2+)-dependent interaction between phagosomes and the actin cytoskeleton. Its function is as follows. Functions at least in part by activating the formyl peptide receptors and downstream signaling cascades. Promotes chemotaxis of granulocytes and monocytes via activation of the formyl peptide receptors. Promotes rearrangement of the actin cytoskeleton, cell polarization and cell migration. Promotes resolution of inflammation and wound healing. Acts via neutrophil N-formyl peptide receptors to enhance the release of CXCL2. This chain is Annexin A1 (ANXA1), found in Cavia cutleri (Guinea pig).